We begin with the raw amino-acid sequence, 199 residues long: Ribonuclease HI (199 aa).

The not required for RNase H activity stretch occupies residues 1–68 (MPVVECDIQT…TAVVQPDRGG (68 aa)). An RNase H type-1 domain is found at 66–197 (RGGRVHAYFD…ADALANEALD (132 aa)). Residues 69–199 (RVHAYFDGAS…ALANEALDDA (131 aa)) are as active as intact RNase H. D75, E115, D139, and D189 together coordinate Mg(2+). D75, E115, D139, and D189 together coordinate Mn(2+).

This sequence belongs to the RNase H family. The cofactor is Mn(2+). Requires Mg(2+) as cofactor. It depends on Co(2+) as a cofactor. Ni(2+) serves as cofactor.

It is found in the cytoplasm. It catalyses the reaction Endonucleolytic cleavage to 5'-phosphomonoester.. Nuclease that specifically degrades the RNA of RNA-DNA hybrids; seems to act exonucleolytically on RNA/DNA hybrids. Endonucleolytically removes RNA primers from the Okazaki fragments of lagging strand synthesis on its own. Complements the temperature-sensitive phenotype of an E.coli double rnhA/rnhB (RNase H) disruption mutant. In Halobacterium salinarum (strain ATCC 700922 / JCM 11081 / NRC-1) (Halobacterium halobium), this protein is Ribonuclease HI (rnhA).